The chain runs to 545 residues: Glucose-6-phosphate isomerase (545 aa).

Glutamate 351 (proton donor) is an active-site residue. Residues histidine 382 and lysine 510 contribute to the active site.

This sequence belongs to the GPI family.

The protein resides in the cytoplasm. It catalyses the reaction alpha-D-glucose 6-phosphate = beta-D-fructose 6-phosphate. It participates in carbohydrate biosynthesis; gluconeogenesis. The protein operates within carbohydrate degradation; glycolysis; D-glyceraldehyde 3-phosphate and glycerone phosphate from D-glucose: step 2/4. Catalyzes the reversible isomerization of glucose-6-phosphate to fructose-6-phosphate. In Shewanella amazonensis (strain ATCC BAA-1098 / SB2B), this protein is Glucose-6-phosphate isomerase.